A 403-amino-acid polypeptide reads, in one-letter code: MNRKVSKFLKDYRVILLIVLVAASITAISTMGIQQGLDLQGGSLIQIQLERPVDAATMNTVTSVLDKRLNIFGVKDVKVRASGDQNVIVEIAGVQPDQVADIVGKPGKFEAKIGNETVLTGTDIVSVQPPIITGNEWEVPFRLSTDGARKFAEAARGKAGEPVKMYLDDRLITAPEISAEVATGKPVTDVRITGAENSKAEAEVQAKEIETLLKSGSLPVKVKIVGVSSVSPELGKQFAEGAVIAGLLAVLAIAVILIVRYRSPILVLPIFFTTLAELLLILGAAAVIRWNIDLAAIAGILAAIGTGVDDQIIITDEVLSGEGRRTRRKFRIKDAFFIIFASAGTLIAAMLPLAYIGFSRGATGIGLLAGFAFTTVLGVIIGVFITRPVYARFIETFNVAGRK.

6 consecutive transmembrane segments (helical) span residues 14–34, 238–258, 265–285, 294–314, 336–356, and 365–385; these read VILL…MGIQ, FAEG…VILI, ILVL…LGAA, LAAI…QIII, FFII…LAYI, and IGLL…GVFI.

The protein belongs to the SecD/SecF family. SecD subfamily. In terms of assembly, part of the protein translocation apparatus. Forms a complex with SecF.

It localises to the cell membrane. Its function is as follows. Involved in protein export. In Methanothermobacter thermautotrophicus (strain ATCC 29096 / DSM 1053 / JCM 10044 / NBRC 100330 / Delta H) (Methanobacterium thermoautotrophicum), this protein is Protein-export membrane protein SecD.